The chain runs to 315 residues: tRNA pseudouridine synthase B (315 aa).

Asp47 (nucleophile) is an active-site residue.

The protein belongs to the pseudouridine synthase TruB family. Type 1 subfamily.

It carries out the reaction uridine(55) in tRNA = pseudouridine(55) in tRNA. Its function is as follows. Responsible for synthesis of pseudouridine from uracil-55 in the psi GC loop of transfer RNAs. This chain is tRNA pseudouridine synthase B, found in Shewanella pealeana (strain ATCC 700345 / ANG-SQ1).